The chain runs to 494 residues: Protein DETOXIFICATION 23 (494 aa).

The tract at residues 1–25 (MARREGEVTETLLKKSTENRGEDRD) is disordered. The next 12 helical transmembrane spans lie at 40 to 60 (LWVV…LSLI), 74 to 94 (AAYS…LLGM), 123 to 143 (IVLT…GPIL), 158 to 178 (IIAL…TCQM), 188 to 208 (IIAY…WLLV), 223 to 243 (LVAH…GGCT), 268 to 288 (GGMI…TGNL), 297 to 317 (ALAI…GFMA), 340 to 360 (MVVV…FLFL), 384 to 404 (LLAF…VAVG), 416 to 436 (LACY…VVGL), and 441 to 461 (VWLG…VMTM).

The protein belongs to the multi antimicrobial extrusion (MATE) (TC 2.A.66.1) family.

The protein localises to the membrane. This Arabidopsis thaliana (Mouse-ear cress) protein is Protein DETOXIFICATION 23.